We begin with the raw amino-acid sequence, 821 residues long: Serine/threonine-protein kinase RAD53 (821 aa).

A Phosphoserine modification is found at Ser-24. The 51-residue stretch at 66-116 (WTFGRNPACDYHLGNISRLSNKHFQILLGEDGNLLLNDISTNGTWLNGQKV) folds into the FHA 1 domain. Ser-175 carries the phosphoserine modification. The Protein kinase domain occupies 198-466 (SIIDEVVGQG…AAKALNHPWI (269 aa)). ATP is bound by residues 204-212 (VGQGAFATV) and Lys-227. Catalysis depends on Asp-319, which acts as the Proton acceptor. 2 positions are modified to phosphoserine: Ser-547 and Ser-560. One can recognise an FHA 2 domain in the interval 601-664 (FFIGRSEDCN…NVSYLNNNRM (64 aa)). Residues 735 to 770 (AAQRANQPSASSSSMSAKKPPVSDTNNNGNNSVLND) form a disordered region. The span at 742 to 770 (PSASSSSMSAKKPPVSDTNNNGNNSVLND) shows a compositional bias: low complexity. A phosphoserine mark is found at Ser-774 and Ser-793. The disordered stretch occupies residues 791-821 (SLSQSQIDPSKKVKRAKLDQTSKGPENLQFS). The span at 809 to 821 (DQTSKGPENLQFS) shows a compositional bias: polar residues.

The protein belongs to the protein kinase superfamily. CAMK Ser/Thr protein kinase family. CHEK2 subfamily. Interacts (via domain FHA 1) with PTC2 (when phosphorylated); the interaction is direct and serves to regulate DNA damage checkpoint signaling. Interacts with PIN4. Autophosphorylated. Phosphorylated in response to DNA double-strand breaks; dephosphorylation is mediated by PTC2 and PTC3.

The protein resides in the nucleus. The catalysed reaction is L-seryl-[protein] + ATP = O-phospho-L-seryl-[protein] + ADP + H(+). It carries out the reaction L-threonyl-[protein] + ATP = O-phospho-L-threonyl-[protein] + ADP + H(+). It catalyses the reaction L-tyrosyl-[protein] + ATP = O-phospho-L-tyrosyl-[protein] + ADP + H(+). Its activity is regulated as follows. Inactivated by dephosphorylation via recruitment of PTC2. Controls S-phase checkpoint as well as G1 and G2 DNA damage checkpoints. Phosphorylates proteins on serine, threonine, and tyrosine. Prevents entry into anaphase and mitotic exit after DNA damage via regulation of the Polo kinase CDC5. Seems to be involved in the phosphorylation of RPH1. In Saccharomyces cerevisiae (strain ATCC 204508 / S288c) (Baker's yeast), this protein is Serine/threonine-protein kinase RAD53 (RAD53).